Here is a 308-residue protein sequence, read N- to C-terminus: Oxygen-dependent coproporphyrinogen-III oxidase (308 aa).

Residue Ser-94 participates in substrate binding. The a divalent metal cation site is built by His-98 and His-108. His-108 serves as the catalytic Proton donor. Substrate is bound at residue 110–112 (NVR). A divalent metal cation-binding residues include His-147 and His-177. The segment at 242 to 277 (YVEFNLVWDRGTLFGLQTGGRTESILMSMPPLVRWE) is important for dimerization. 260-262 (GGR) serves as a coordination point for substrate.

Belongs to the aerobic coproporphyrinogen-III oxidase family. In terms of assembly, homodimer. A divalent metal cation serves as cofactor.

The protein localises to the cytoplasm. The catalysed reaction is coproporphyrinogen III + O2 + 2 H(+) = protoporphyrinogen IX + 2 CO2 + 2 H2O. It functions in the pathway porphyrin-containing compound metabolism; protoporphyrin-IX biosynthesis; protoporphyrinogen-IX from coproporphyrinogen-III (O2 route): step 1/1. Its function is as follows. Involved in the heme biosynthesis. Catalyzes the aerobic oxidative decarboxylation of propionate groups of rings A and B of coproporphyrinogen-III to yield the vinyl groups in protoporphyrinogen-IX. This chain is Oxygen-dependent coproporphyrinogen-III oxidase, found in Yersinia enterocolitica serotype O:8 / biotype 1B (strain NCTC 13174 / 8081).